We begin with the raw amino-acid sequence, 483 residues long: Cobyric acid synthase (483 aa).

The GATase cobBQ-type domain occupies 251–438 (ALIVAVPMLP…LHGIFSADRF (188 aa)). C333 serves as the catalytic Nucleophile. H430 is a catalytic residue.

Belongs to the CobB/CobQ family. CobQ subfamily.

It functions in the pathway cofactor biosynthesis; adenosylcobalamin biosynthesis. In terms of biological role, catalyzes amidations at positions B, D, E, and G on adenosylcobyrinic A,C-diamide. NH(2) groups are provided by glutamine, and one molecule of ATP is hydrogenolyzed for each amidation. This Brucella abortus (strain S19) protein is Cobyric acid synthase.